The sequence spans 274 residues: Penicillin-insensitive murein endopeptidase (274 aa).

Positions 1–19 (MNKTAIALLALLASSASLA) are cleaved as a signal peptide. 3 disulfides stabilise this stretch: cysteine 44/cysteine 265, cysteine 187/cysteine 235, and cysteine 216/cysteine 223. Zn(2+)-binding residues include histidine 110, histidine 113, aspartate 120, aspartate 147, histidine 150, and histidine 211. Residues 227–274 (PLPPPGDGCGAELQSWFEPPKPGTTKPEKKTPPPLPPSCQALLDEHVI) form a disordered region.

It belongs to the peptidase M74 family. Dimer. The cofactor is Zn(2+).

It is found in the periplasm. Murein endopeptidase that cleaves the D-alanyl-meso-2,6-diamino-pimelyl amide bond that connects peptidoglycan strands. Likely plays a role in the removal of murein from the sacculus. This Escherichia coli O17:K52:H18 (strain UMN026 / ExPEC) protein is Penicillin-insensitive murein endopeptidase.